Here is a 461-residue protein sequence, read N- to C-terminus: Argininosuccinate lyase (461 aa).

It belongs to the lyase 1 family. Argininosuccinate lyase subfamily.

The protein resides in the cytoplasm. It carries out the reaction 2-(N(omega)-L-arginino)succinate = fumarate + L-arginine. The protein operates within amino-acid biosynthesis; L-arginine biosynthesis; L-arginine from L-ornithine and carbamoyl phosphate: step 3/3. This Dehalococcoides mccartyi (strain CBDB1) protein is Argininosuccinate lyase.